We begin with the raw amino-acid sequence, 213 residues long: Deoxyribose-phosphate aldolase (213 aa).

Residue aspartate 89 is the Proton donor/acceptor of the active site. The active-site Schiff-base intermediate with acetaldehyde is the lysine 151. Residue lysine 180 is the Proton donor/acceptor of the active site.

The protein belongs to the DeoC/FbaB aldolase family. DeoC type 1 subfamily.

Its subcellular location is the cytoplasm. It catalyses the reaction 2-deoxy-D-ribose 5-phosphate = D-glyceraldehyde 3-phosphate + acetaldehyde. The protein operates within carbohydrate degradation; 2-deoxy-D-ribose 1-phosphate degradation; D-glyceraldehyde 3-phosphate and acetaldehyde from 2-deoxy-alpha-D-ribose 1-phosphate: step 2/2. Functionally, catalyzes a reversible aldol reaction between acetaldehyde and D-glyceraldehyde 3-phosphate to generate 2-deoxy-D-ribose 5-phosphate. The sequence is that of Deoxyribose-phosphate aldolase from Finegoldia magna (strain ATCC 29328 / DSM 20472 / WAL 2508) (Peptostreptococcus magnus).